The chain runs to 103 residues: Vesicle-associated membrane protein 3 (103 aa).

The disordered stretch occupies residues 1-25; it reads MSTGVPSGSSAATGSNRRLQQTQNQ. Over 1–81 the chain is Cytoplasmic; that stretch reads MSTGVPSGSS…KRKYWWKNCK (81 aa). A v-SNARE coiled-coil homology domain is found at 18-78; the sequence is RLQQTQNQVD…AKLKRKYWWK (61 aa). Glycyl lysine isopeptide (Lys-Gly) (interchain with G-Cter in ubiquitin) cross-links involve residues Lys70, Lys72, and Lys81. A helical; Anchor for type IV membrane protein transmembrane segment spans residues 82–102; sequence MWAIGISVLVIIVIIIIVWCV. A topological domain (vesicular) is located at residue Ser103.

It belongs to the synaptobrevin family. Interacts with POPDC1 (via the C-terminus cytoplasmic tail). Interacts with BCAP31; involved in VAMP3 export from the endoplasmic reticulum. Interacts with BAIAP3; this interaction is increased in the presence of calcium. Interacts with PICALM. Ubiquitinated by RNF167 at Lys-70, Lys-72 and Lys-81, regulating the recycling endosome pathway. Post-translationally, (Microbial infection) Targeted and hydrolyzed by C.botulinum neurotoxin type D (BoNT/D, botD) which hydrolyzes the 46-Lys-|-Leu-47 bond and probably inhibits neurotransmitter release. In terms of processing, (Microbial infection) Targeted and hydrolyzed by C.botulinum neurotoxin type F (BoNT/F, botF) which hydrolyzes the 45-Gln-|-Lys-46 bond and probably inhibits neurotransmitter release. (Microbial infection) Targeted and hydrolyzed by C.tetani toxin (tetX) which hydrolyzes the 63-Gln-|-Phe-64 bond and probably inhibits neurotransmitter release. Ubiquitous.

It localises to the early endosome membrane. The protein localises to the recycling endosome membrane. It is found in the synapse. The protein resides in the synaptosome. In terms of biological role, SNARE involved in vesicular transport from the late endosomes to the trans-Golgi network. The sequence is that of Vesicle-associated membrane protein 3 (Vamp3) from Rattus norvegicus (Rat).